Here is a 507-residue protein sequence, read N- to C-terminus: MKSIKPVLLLILDGFGHRTEGDDNAILHARMPVWSRLREQYAYGTINASENFVGLPSGQFGNSEVGHLNIGAGRIVQQDISRIDCDIEDGRFSSNDTLQQAMSKAQGSALHILGLLSDGGVHSHENHIHALIRAAQAAGVPKIYVHAFLDGRDTPPRSAETYLKRLDAALAECPNARLVSVTGRYWAMDRDKRWERVEPAYRLLVDGEGLFHAETGLDALKAAYERDENDEFVKATGIGAPVKMQDGDALIFMNFRADRARQLTSALTDPAFDGFKARQPKFGYYATLTSYGEAYSALPVAYAPQKIHNGMGEYLSSKGLKQLRIAETEKYPHVTYFFNGGEEQVYPGEDRILVPSPKVATYDLQPEMSAGEVTDKIVAAIQSGQYQAIFCNYANGDMVGHSGVFDAAVKAVEALDGCIERCVDAMLAAGGEVLITADHGNCEQMYDGEHHQPHTQHTTNQVPFLYIGRPAKIRAGGSLRDISPSLLAMMGLEQPAEMTGQSLIDFQ.

Positions 13 and 63 each coordinate Mn(2+). Ser-63 serves as the catalytic Phosphoserine intermediate. Substrate-binding positions include His-122, 152 to 153 (RD), Arg-184, Arg-190, 256 to 259 (RADR), and Lys-330. Positions 397, 401, 438, 439, and 457 each coordinate Mn(2+).

This sequence belongs to the BPG-independent phosphoglycerate mutase family. In terms of assembly, monomer. The cofactor is Mn(2+).

It catalyses the reaction (2R)-2-phosphoglycerate = (2R)-3-phosphoglycerate. It participates in carbohydrate degradation; glycolysis; pyruvate from D-glyceraldehyde 3-phosphate: step 3/5. Its function is as follows. Catalyzes the interconversion of 2-phosphoglycerate and 3-phosphoglycerate. The protein is 2,3-bisphosphoglycerate-independent phosphoglycerate mutase of Chromobacterium violaceum (strain ATCC 12472 / DSM 30191 / JCM 1249 / CCUG 213 / NBRC 12614 / NCIMB 9131 / NCTC 9757 / MK).